A 394-amino-acid chain; its full sequence is Gap junction gamma-1 protein (394 aa).

Topologically, residues 1 to 22 (MSWSFLTRLLEEIHNHSTFVGK) are cytoplasmic. A helical transmembrane segment spans residues 23–45 (IWLSVLIVFRIVLTAVGGESIYY). The Extracellular segment spans residues 46-75 (DEQSKFVCNTEQPGCENVCYDAFAPLSHVR). Residues 76–95 (FWVFQIILVATPSVMYLGYA) form a helical membrane-spanning segment. At 96–176 (IHKIARMVEH…RRIREDGLMR (81 aa)) the chain is on the cytoplasmic side. A helical membrane pass occupies residues 177-199 (IYVLQLLVRATFEVGFLIGQYLL). The Extracellular portion of the chain corresponds to 200–229 (YGFEVSPVFVCSRKPCPHKIDCFISRPTEK). A helical membrane pass occupies residues 230–252 (TIFLLIMYGVSCMCLLLNVWEML). Topologically, residues 253–394 (HLGFGTIRDT…SGDGKNSVWI (142 aa)) are cytoplasmic. The interval 354 to 394 (IQAYNNQNNPGSSSREKKSKAGSNKSSASSKSGDGKNSVWI) is disordered. The segment covering 356-366 (AYNNQNNPGSS) has biased composition (polar residues). The segment covering 374–394 (AGSNKSSASSKSGDGKNSVWI) has biased composition (low complexity).

The protein belongs to the connexin family. Gamma-type subfamily. A connexon is composed of a hexamer of connexins. Mostly in heart and stomach.

The protein resides in the cell membrane. It localises to the cell junction. The protein localises to the gap junction. In terms of biological role, one gap junction consists of a cluster of closely packed pairs of transmembrane channels, the connexons, through which materials of low MW diffuse from one cell to a neighboring cell. This Gallus gallus (Chicken) protein is Gap junction gamma-1 protein (GJC1).